We begin with the raw amino-acid sequence, 89 residues long: Small ribosomal subunit protein uS15 (89 aa).

The protein belongs to the universal ribosomal protein uS15 family. In terms of assembly, part of the 30S ribosomal subunit. Forms a bridge to the 50S subunit in the 70S ribosome, contacting the 23S rRNA.

Functionally, one of the primary rRNA binding proteins, it binds directly to 16S rRNA where it helps nucleate assembly of the platform of the 30S subunit by binding and bridging several RNA helices of the 16S rRNA. Forms an intersubunit bridge (bridge B4) with the 23S rRNA of the 50S subunit in the ribosome. The sequence is that of Small ribosomal subunit protein uS15 from Ligilactobacillus salivarius (strain UCC118) (Lactobacillus salivarius).